We begin with the raw amino-acid sequence, 464 residues long: D-inositol 3-phosphate glycosyltransferase (464 aa).

Basic and acidic residues predominate over residues 1–20 (MEGAPRRPDRHARSEEERHV). Positions 1-44 (MEGAPRRPDRHARSEEERHVSQYASRLGRRSPAAPTRRRMLRKP) are disordered. His-53 serves as a coordination point for 1D-myo-inositol 3-phosphate. UDP-N-acetyl-alpha-D-glucosamine is bound by residues 59-60 (QP) and Gly-67. Residues 64–69 (DAGGMN), Lys-122, Tyr-155, Thr-179, and Arg-199 each bind 1D-myo-inositol 3-phosphate. Residues Arg-274, Lys-279, and Val-340 each contribute to the UDP-N-acetyl-alpha-D-glucosamine site. The Mg(2+) site is built by Phe-349, Arg-350, and Ala-352. UDP-N-acetyl-alpha-D-glucosamine-binding residues include Glu-362 and Glu-370. Thr-376 contacts Mg(2+).

Belongs to the glycosyltransferase group 1 family. MshA subfamily. As to quaternary structure, homodimer.

It catalyses the reaction 1D-myo-inositol 3-phosphate + UDP-N-acetyl-alpha-D-glucosamine = 1D-myo-inositol 2-acetamido-2-deoxy-alpha-D-glucopyranoside 3-phosphate + UDP + H(+). Its function is as follows. Catalyzes the transfer of a N-acetyl-glucosamine moiety to 1D-myo-inositol 3-phosphate to produce 1D-myo-inositol 2-acetamido-2-deoxy-glucopyranoside 3-phosphate in the mycothiol biosynthesis pathway. The protein is D-inositol 3-phosphate glycosyltransferase of Streptomyces avermitilis (strain ATCC 31267 / DSM 46492 / JCM 5070 / NBRC 14893 / NCIMB 12804 / NRRL 8165 / MA-4680).